The primary structure comprises 142 residues: UPF0332 protein PH1297 (142 aa).

Belongs to the UPF0332 family.

This Pyrococcus horikoshii (strain ATCC 700860 / DSM 12428 / JCM 9974 / NBRC 100139 / OT-3) protein is UPF0332 protein PH1297.